We begin with the raw amino-acid sequence, 701 residues long: Type 3 secretion system secretin (701 aa).

A signal peptide spans 1–21; that stretch reads MRKALMWLPLLLIGLSPATWA. The segment covering 229-238 has biased composition (gly residues); the sequence is RGNGLAGGGS. A disordered region spans residues 229–252; it reads RGNGLAGGGSPDTPSLPMSSSGLD. The segment covering 240–252 has biased composition (polar residues); that stretch reads DTPSLPMSSSGLD.

Belongs to the bacterial secretin family. T3SS SctC subfamily. As to quaternary structure, the core secretion machinery of the T3SS is composed of approximately 20 different proteins, including cytoplasmic components, a base, an export apparatus and a needle. This subunit is part of the base, which anchors the injectisome in the bacterial cell envelope. Forms a stable homooligomeric complex.

The protein resides in the cell outer membrane. Component of the type III secretion system (T3SS), also called injectisome, which is used to inject bacterial effector proteins into eukaryotic host cells. Forms a ring-shaped multimeric structure with an apparent central pore in the outer membrane. Involved in the secretion of a proteinaceous elicitor of the hypersensitivity response in plants. In Pseudomonas syringae pv. syringae, this protein is Type 3 secretion system secretin.